The following is a 513-amino-acid chain: Sulfhydryl oxidase 1 (513 aa).

Residues 1–30 form the signal peptide; that stretch reads MAAAAVARRVVLVLVLAAASLAAAPRGAAA. The region spanning 31–174 is the Thioredoxin domain; the sequence is RSLGGREGPG…LLKWINNQMK (144 aa). A glycan (N-linked (GlcNAc...) asparagine) is linked at Asn-51. Residues Cys-76 and Cys-79 each act as nucleophile in the active site. Cysteines 76 and 79 form a disulfide. 2 N-linked (GlcNAc...) asparagine glycosylation sites follow: Asn-193 and Asn-266. Residues Cys-301 and Cys-313 are joined by a disulfide bond. The ERV/ALR sulfhydryl oxidase domain occupies 304–406; that stretch reads SKSETRGFSC…GDPLFPKVTW (103 aa). FAD-binding positions include Arg-309, Trp-316, His-320, Glu-350, His-354, 377-384, Lys-403, and Trp-406; that span reads WSTHNKVN. The cysteines at positions 348 and 351 are disulfide-linked. The cysteines at positions 412 and 415 are disulfide-linked.

Requires FAD as cofactor.

The protein resides in the secreted. It carries out the reaction 2 R'C(R)SH + O2 = R'C(R)S-S(R)CR' + H2O2. Functionally, catalyzes the oxidation of sulfhydryl groups in peptide and protein thiols to disulfides with the reduction of oxygen to hydrogen peroxide. May contribute to disulfide bond formation in a variety of secreted proteins. This is Sulfhydryl oxidase 1 (QSOX1) from Oryza sativa subsp. japonica (Rice).